A 240-amino-acid chain; its full sequence is uncharacterized protein (240 aa).

The segment at 3 to 27 adopts a C2H2-type zinc-finger fold; sequence LKCLECDKLLSSIEMAEFHSTKTSH. 2 disordered regions span residues 21–43 and 120–171; these read HSTK…RSPE and AEIE…RFSI. A compositionally biased stretch (basic and acidic residues) spans 120–136; that stretch reads AEIERDKKRRAAERENK. Residues 155-166 are compositionally biased toward low complexity; sequence SSSTCTRTPPTS.

This is an uncharacterized protein from Schizosaccharomyces pombe (strain 972 / ATCC 24843) (Fission yeast).